A 628-amino-acid chain; its full sequence is Dual specificity testis-specific protein kinase 1 (628 aa).

A disordered region spans residues 1–35; it reads MAGERPPLRGPGPGETPVEGPGGAGGGPGRGRPSS. Residues 20–30 show a composition bias toward gly residues; it reads GPGGAGGGPGR. The 259-residue stretch at 52–310 folds into the Protein kinase domain; sequence FDCAEKIGAG…EITQHLEQIL (259 aa). ATP is bound by residues 58–66 and lysine 81; that span reads IGAGFFSEV. Aspartate 170 (proton acceptor) is an active-site residue. Serine 215 is modified (phosphoserine; by autocatalysis). Disordered stretches follow at residues 330 to 376, 424 to 490, and 538 to 568; these read TYNQ…DNLT, PESL…QLPL, and RAQH…EEGL. An Omega-N-methylarginine modification is found at arginine 338. Residues 348–357 show a composition bias toward basic and acidic residues; it reads SDPRLSRSRS. A required for interaction with YWHAB region spans residues 421-526; sequence VASPESLVQP…NNNPPAVVVN (106 aa). Phosphoserine is present on serine 439. Pro residues predominate over residues 478 to 487; that stretch reads EPEPPGPAPQ. A required for interaction with PARVA region spans residues 529–626; the sequence is QGWAREPWNR…PTPSLQLPGA (98 aa). The tract at residues 529–628 is required for interaction with SPRED1 and SPRY2. Required for TESK1-mediated dephosphorylation of SPRY2 and SPRY2 inhibition of ERK phosphorylation; it reads QGWAREPWNR…PSLQLPGARS (100 aa).

This sequence belongs to the protein kinase superfamily. TKL Ser/Thr protein kinase family. Interacts (via both C- and N-termini) with SPRY4 (via C-terminus); the interaction inhibits TESK1 kinase activity. Interacts with TAOK1; the interaction inhibits TAOK1 kinase activity. Interacts (via C-terminus) with SPRED1 (via C-terminus); the interaction inhibits TESK1 kinase activity. Interacts (via C-terminus) with PARVA/PARVIN (via C-terminus); the interaction inhibits TESK1 kinase activity. Interacts with YWHAB/14-3-3 beta; the interaction is dependent on the phosphorylation of TESK1 Ser-439 and inhibits TESK1 kinase activity. Interacts with SPRY1, SPRY3 and SPRED2. Interacts (via C-terminus) with SPRY2 (via C-terminus); the interaction disrupts SPRY2 interaction with PPP2CA/PP2A-C, possibly by vesicular sequestration of SPRY2. Therefore dephosphorylation of SPRY2 by the serine/threonine-protein phosphatase 2A (PP2A) holoenzyme is lost, inhibiting its interaction with GRB2. Mg(2+) is required as a cofactor. It depends on Mn(2+) as a cofactor. Autophosphorylated on serine and tyrosine residues. In terms of tissue distribution, weakly expressed in sciatic nerves (at protein level). Highly expressed in testicular germ cells. Expressed at low levels in brain, lung, heart, liver and kidney.

Its subcellular location is the cytoplasm. It localises to the perinuclear region. The protein resides in the cytoskeleton. It is found in the microtubule organizing center. The protein localises to the centrosome. Its subcellular location is the cell projection. It localises to the lamellipodium. It catalyses the reaction L-seryl-[protein] + ATP = O-phospho-L-seryl-[protein] + ADP + H(+). It carries out the reaction L-threonyl-[protein] + ATP = O-phospho-L-threonyl-[protein] + ADP + H(+). The catalysed reaction is L-tyrosyl-[protein] + ATP = O-phospho-L-tyrosyl-[protein] + ADP + H(+). Activated by autophosphorylation on Ser-215. Kinase activity is inhibited by SPRED1. In terms of biological role, dual specificity protein kinase activity catalyzing autophosphorylation and phosphorylation of exogenous substrates on both serine/threonine and tyrosine residues. Regulates the cellular cytoskeleton by enhancing actin stress fiber formation via phosphorylation of cofilin and by preventing microtubule breakdown via inhibition of TAOK1/MARKK kinase activity. Inhibits podocyte motility via regulation of actin cytoskeletal dynamics and phosphorylation of CFL1. Positively regulates integrin-mediated cell spreading, via phosphorylation of cofilin. Suppresses ciliogenesis via multiple pathways; phosphorylation of CFL1, suppression of ciliary vesicle directional trafficking to the ciliary base, and by facilitating YAP1 nuclear localization where it acts as a transcriptional corepressor of the TEAD4 target genes AURKA and PLK1. Probably plays a central role at and after the meiotic phase of spermatogenesis. The chain is Dual specificity testis-specific protein kinase 1 (Tesk1) from Rattus norvegicus (Rat).